The chain runs to 680 residues: ATPase family AAA domain-containing protein FIGL1 (680 aa).

Disordered regions lie at residues 214–234, 250–275, and 288–352; these read YGNSIGKPDNQRKTSVNNQDR, FGTKRPHAETSSLANDGEVKEDGAPN, and VRQK…GGKT. The segment covering 295-308 has biased composition (polar residues); that stretch reads TESPSSCLSPQSDK. Residues 313 to 323 are compositionally biased toward gly residues; it reads RGYGSRSGGLR. Residues 336–346 are compositionally biased toward polar residues; it reads TNGNNVGNLTS. ATP is bound by residues A406 and 446–451; that span reads GTGKTM.

It belongs to the AAA ATPase family. Mg(2+) serves as cofactor.

The protein resides in the nucleus. The enzyme catalyses ATP + H2O = ADP + phosphate + H(+). Functionally, involved in DNA double-strand break (DBS) repair via homologous recombination (HR). Limits class II meiotic crossover (CO) formation by regulating the invasion step of meiotic HR. May counteract DMC1 and RAD51-mediated inter-homolog strand invasion to limit CO formation. Functions independently of FANCM. The sequence is that of ATPase family AAA domain-containing protein FIGL1 from Arabidopsis thaliana (Mouse-ear cress).